The following is a 51-amino-acid chain: Protein SspM (51 aa).

This sequence belongs to the alpha/beta-type SASP family.

In Mycolicibacterium phlei (Mycobacterium phlei), this protein is Protein SspM (sspM).